The following is a 412-amino-acid chain: Maltoporin (412 aa).

The signal sequence occupies residues 1–22 (MKKVSVIAAAVAATLAAGSAFA).

This sequence belongs to the porin LamB (TC 1.B.3) family. In terms of assembly, homotrimer formed of three 18-stranded antiparallel beta-barrels, containing three independent channels.

It localises to the cell outer membrane. The enzyme catalyses beta-maltose(in) = beta-maltose(out). In terms of biological role, involved in the transport of maltose and maltodextrins. The chain is Maltoporin from Vibrio cholerae serotype O1 (strain ATCC 39315 / El Tor Inaba N16961).